Reading from the N-terminus, the 383-residue chain is Trichodiene synthase (383 aa).

It belongs to the trichodiene synthase family.

The catalysed reaction is (2E,6E)-farnesyl diphosphate = trichodiene + diphosphate. It functions in the pathway sesquiterpene biosynthesis; trichothecene biosynthesis. Functionally, TS is a member of the terpene cyclase group of enzymes. It catalyzes the isomerization and cyclization of farnesyl pyro-phosphate to form trichodiene, the first cyclic intermediate in the biosynthetic pathway for trichothecenes. It serves to branch trichothecene biosynthesis from the isoprenoid pathway. This Stachybotrys chartarum (Toxic black mold) protein is Trichodiene synthase (TRI5).